The chain runs to 173 residues: MSIILGIDPGSRVTGYGVIRQNGRHLQYLGSGCIRTSEKDLPGRLKQIYAGVTEIITQFQPDVFAIEQVFMAKNADSALKLGQARGAAIVSAVNHDLPVYEYAARLIKQAVVGTGGADKAQVQHMVQHMLKLPAKPQADAADALGVAICHANTNKTLIALAGQATSAKRGRYR.

Residues Asp-8, Glu-67, and Asp-139 contribute to the active site. Asp-8, Glu-67, and Asp-139 together coordinate Mg(2+).

Belongs to the RuvC family. As to quaternary structure, homodimer which binds Holliday junction (HJ) DNA. The HJ becomes 2-fold symmetrical on binding to RuvC with unstacked arms; it has a different conformation from HJ DNA in complex with RuvA. In the full resolvosome a probable DNA-RuvA(4)-RuvB(12)-RuvC(2) complex forms which resolves the HJ. It depends on Mg(2+) as a cofactor.

It is found in the cytoplasm. It carries out the reaction Endonucleolytic cleavage at a junction such as a reciprocal single-stranded crossover between two homologous DNA duplexes (Holliday junction).. In terms of biological role, the RuvA-RuvB-RuvC complex processes Holliday junction (HJ) DNA during genetic recombination and DNA repair. Endonuclease that resolves HJ intermediates. Cleaves cruciform DNA by making single-stranded nicks across the HJ at symmetrical positions within the homologous arms, yielding a 5'-phosphate and a 3'-hydroxyl group; requires a central core of homology in the junction. The consensus cleavage sequence is 5'-(A/T)TT(C/G)-3'. Cleavage occurs on the 3'-side of the TT dinucleotide at the point of strand exchange. HJ branch migration catalyzed by RuvA-RuvB allows RuvC to scan DNA until it finds its consensus sequence, where it cleaves and resolves the cruciform DNA. The protein is Crossover junction endodeoxyribonuclease RuvC of Vibrio vulnificus (strain YJ016).